The chain runs to 236 residues: Phosphoribosylaminoimidazole-succinocarboxamide synthase (236 aa).

Belongs to the SAICAR synthetase family.

It catalyses the reaction 5-amino-1-(5-phospho-D-ribosyl)imidazole-4-carboxylate + L-aspartate + ATP = (2S)-2-[5-amino-1-(5-phospho-beta-D-ribosyl)imidazole-4-carboxamido]succinate + ADP + phosphate + 2 H(+). The protein operates within purine metabolism; IMP biosynthesis via de novo pathway; 5-amino-1-(5-phospho-D-ribosyl)imidazole-4-carboxamide from 5-amino-1-(5-phospho-D-ribosyl)imidazole-4-carboxylate: step 1/2. This chain is Phosphoribosylaminoimidazole-succinocarboxamide synthase, found in Pseudomonas putida (strain ATCC 700007 / DSM 6899 / JCM 31910 / BCRC 17059 / LMG 24140 / F1).